The following is a 301-amino-acid chain: MLRLSAPGQLDDDLCLLGDVQVPVFLLRLGEASWALVEGGISRDAELVWADLCRWVADPSQVHYWLITHKHYDHCGLLPYLCPRLPNVQVLASERTCQAWKSESAVRVVERLNRQLLRAEQRLPEACAWDALPVRAVADGEWLELGPRHRLQVIEAHGHSDDHVVFYDVRRRRLFCGDALGEFDEAEGVWRPLVFDDMEAYLESLERLQRLPTLLQLIPGHGGLLRGRLAADGAESAYTECLRLCRRLLWRQSMGESLDELSEELHRAWGGQSVDFLPGELHLGSMRRMLEILSRQALPLD.

The Fe cation site is built by His-69, His-71, Asp-73, His-74, His-159, Asp-178, and His-221.

This sequence belongs to the metallo-beta-lactamase superfamily.

It catalyses the reaction (2-aminobenzoyl)acetyl-CoA + H2O = (2-aminobenzoyl)acetate + CoA + H(+). Thioesterase activity, but not pyocyanine production, is inhibited by 2-(pyridin-3-yl)benzoic acid, 2-(1H-pyrrol-1-yl)benzoic acid and 3-methylthiophene-2-carboxylic acid. Compounds bind to the active center. Functionally, required for the biosynthesis of the quorum-sensing signaling molecules 2-heptyl-4(1H)-quinolone (HHQ) and 2-heptyl-3-hydroxy-4(1H)-quinolone (Pseudomonas quinolone signal or PQS), which are important for biofilm formation and virulence. Catalyzes the hydrolysis of the intermediate 2-aminobenzoylacetyl-CoA (2-ABA-CoA) to form 2-aminobenzoylacetate (2-ABA), the precursor of HHQ. In vitro, can also hydrolyze other substrates such as S-ethyl-acetothioacetate and acetoacetyl-CoA, but is inactive against anthraniloyl-CoA, malonyl-CoA and octanoyl-CoA. Beyond its thioesterase function, is involved in the regulation of diverse genes coding for key virulence determinants and biofilm development. The polypeptide is 2-aminobenzoylacetyl-CoA thioesterase (Pseudomonas aeruginosa (strain ATCC 15692 / DSM 22644 / CIP 104116 / JCM 14847 / LMG 12228 / 1C / PRS 101 / PAO1)).